The following is a 225-amino-acid chain: Putative O-phosphotransferase MT2714 (225 aa).

ATP is bound at residue 30–37; sequence GGSSAGKT.

To S.violaceus chloramphenicol 3-O phosphotransferase.

The chain is Putative O-phosphotransferase MT2714 from Mycobacterium tuberculosis (strain CDC 1551 / Oshkosh).